A 588-amino-acid chain; its full sequence is Nucleoporin ndc-1 (588 aa).

A compositionally biased stretch (polar residues) spans 1–12; it reads MMGDSHSSFTTT. The segment at 1–55 is disordered; sequence MMGDSHSSFTTTTDEHLYNQFSPGRRKNDFPAASSSSSSPNLRRSPNRTVSSPRV. Over 1–79 the chain is Cytoplasmic; sequence MMGDSHSSFT…FQAEISVRKR (79 aa). The segment covering 31-48 has biased composition (low complexity); sequence PAASSSSSSPNLRRSPNR. A helical transmembrane segment spans residues 80 to 100; the sequence is LAGAACGYLSTIFFIVTVSIL. The Perinuclear space segment spans residues 101–122; sequence KLTIWAPFSSVQDSLAWWIYPN. Residues 123–143 form a helical membrane-spanning segment; the sequence is AWASIIFVGIASVAMSLFSII. The Cytoplasmic segment spans residues 144-159; the sequence is KFCKVDQLPRLAATDT. The helical transmembrane segment at 160-180 threads the bilayer; the sequence is FALAGVALEFVTRLTFVYTAF. At 181-190 the chain is on the perinuclear space side; it reads CVADFSFSRE. The chain crosses the membrane as a helical span at residues 191–211; the sequence is FAFVAISLAIAISSALVVFRS. Topologically, residues 212–255 are cytoplasmic; that stretch reads DYQLNFSHIQVNSVKTLIDFGTSLPYANISEICGIDAAISYTAA. A helical membrane pass occupies residues 256–276; it reads VALILVVGPMVSGFSAWWLLL. A topological domain (perinuclear space) is located at residue Asn277. Residues 278–298 form a helical membrane-spanning segment; that stretch reads IPFHVVLFGLCFTQQFYSKIS. The Cytoplasmic portion of the chain corresponds to 299 to 588; it reads MKIVNQIVMK…IRMICLTDEL (290 aa).

Belongs to the NDC1 family.

The protein localises to the nucleus. Its subcellular location is the nuclear pore complex. It is found in the nucleus membrane. Its function is as follows. Component of the nuclear pore complex (NPC), which plays a key role in de novo assembly and insertion of NPC in the nuclear envelope. Plays a role in postmitotic nuclear pore complex assembly potentially by promoting localization of nuclear pore complex proteins to the nuclear rim. In Caenorhabditis elegans, this protein is Nucleoporin ndc-1.